A 916-amino-acid polypeptide reads, in one-letter code: MASFRAMTIQQPISVPVPQEATPAEAPAKLTPMMEQYLDIKAAHPGLMLFYRMGDFYELFFEDAEVASKALGIVLTKRGKHQGQDIPMCGVPVERSEDYLHRLIAQGIRVAVCEQMEDPAAARARGNKSVVKRGVVRVVTPGTLTEDNLLDARANNYLLSIARSRGSSGGDRLGLAWIDISTSDFIVTECAFAELTATLARINPNEVIVSDALYSDEAFEPVLRELAAVTPLTRDVFDGATAERRLCDYFAVATMDGLAVLSRLEATAAAACVTYVERTQVGQRPPLAPPAREATGSTMAIDPATRANLELTRTLAGERRGSLLDAIDCTVTSAGSRLLAQRLAAPLTEPAQIGRRLDAVNAFVADSAAREDIRVILRGAPDMTRAMARLSVGRGGPRDLAALRDGILAADQALARLSVLDQPPQEIASVMAALARPARALADEFARALDEQLPLIKRDGGFVRSGYDATLDETRNLRDASRLVVASMQARYADQTGVKALKIRHNNVLGYFVEVTAQHGDKLMSAPLNATFIHRQTLAGQVRFTTSELGEIEAKIANAGERALNLELEIFDRLCAQALAIGDDLRAAAHGFAMLDVATALAKLALDDNYVRPEVDGSLGFAIEGGRHPVVEQSLKREGQPFIANSCDLSPTPGHKSGQLWLLTGPNMAGKSTFLRQNALIALLAQIGSFVPASRARIGIVDRLFSRVGAADDLARGRSTFMVEMVETAAILNQAGERALVILDEIGRGTATFDGLSIAWAAIEHLHESNRCRTLFATHYHELTALAAKLPRLFNATVRVKEWQGDVVFLHEVLPGSADRSYGIQVAKLAGLPPAVISRAKSVLAKLEAADRGQNARALVDDLPLFAVPSRAAVEPAMSKETEELIAAVKDLHPDEMTPREALDALYRLKAKLPAK.

665-672 (GPNMAGKS) contributes to the ATP binding site.

It belongs to the DNA mismatch repair MutS family.

Functionally, this protein is involved in the repair of mismatches in DNA. It is possible that it carries out the mismatch recognition step. This protein has a weak ATPase activity. This is DNA mismatch repair protein MutS from Bradyrhizobium sp. (strain ORS 278).